Reading from the N-terminus, the 852-residue chain is Lon protease homolog 2, peroxisomal (852 aa).

Ser-2 bears the N-acetylserine mark. Positions 13–222 constitute a Lon N-terminal domain; sequence LPLLLTHESV…MTIPLLVRQI (210 aa). 375–382 lines the ATP pocket; the sequence is GPPGVGKT. Residues 651–837 form the Lon proteolytic domain; it reads LSQPGVAIGL…DEVLNAAFDG (187 aa). Residues Ser-743 and Lys-786 contribute to the active site. Residues 850 to 852 carry the Microbody targeting signal motif; the sequence is SKL.

Belongs to the peptidase S16 family. In terms of assembly, interacts with PEX5. Interacts with TYSND1. May interact with enzymes involved in beta-oxidation of fatty acids, including ACOX1/AOX.

It localises to the peroxisome matrix. The enzyme catalyses Hydrolysis of proteins in presence of ATP.. Its function is as follows. ATP-dependent serine protease that mediates the selective degradation of misfolded and unassembled polypeptides in the peroxisomal matrix. Necessary for type 2 peroxisome targeting signal (PTS2)-containing protein processing and facilitates peroxisome matrix protein import. May indirectly regulate peroxisomal fatty acid beta-oxidation through degradation of the self-processed forms of TYSND1. This is Lon protease homolog 2, peroxisomal (Lonp2) from Rattus norvegicus (Rat).